Here is a 59-residue protein sequence, read N- to C-terminus: Large ribosomal subunit protein bL32C (59 aa).

This sequence belongs to the bacterial ribosomal protein bL32 family.

The protein is Large ribosomal subunit protein bL32C (rpmF3) of Enterococcus faecalis (strain ATCC 700802 / V583).